The chain runs to 413 residues: 3-isopropylmalate dehydratase large subunit (413 aa).

[4Fe-4S] cluster contacts are provided by Cys-293, Cys-353, and Cys-356.

The protein belongs to the aconitase/IPM isomerase family. LeuC type 2 subfamily. In terms of assembly, heterodimer of LeuC and LeuD. It depends on [4Fe-4S] cluster as a cofactor.

It carries out the reaction (2R,3S)-3-isopropylmalate = (2S)-2-isopropylmalate. It functions in the pathway amino-acid biosynthesis; L-leucine biosynthesis; L-leucine from 3-methyl-2-oxobutanoate: step 2/4. Functionally, catalyzes the isomerization between 2-isopropylmalate and 3-isopropylmalate, via the formation of 2-isopropylmaleate. The protein is 3-isopropylmalate dehydratase large subunit of Picrophilus torridus (strain ATCC 700027 / DSM 9790 / JCM 10055 / NBRC 100828 / KAW 2/3).